The sequence spans 312 residues: Epoxyqueuosine reductase (312 aa).

Asp-132 functions as the Proton donor in the catalytic mechanism. The region spanning 174-206 is the 4Fe-4S ferredoxin-type 1 domain; the sequence is EVLEADKPSKPICGECEKCIEACPTKAIEEPFI. Residues Cys-186, Cys-189, Cys-192, Cys-196, Cys-212, Cys-240, Cys-243, and Cys-247 each coordinate [4Fe-4S] cluster. A 4Fe-4S ferredoxin-type 2 domain is found at 226-257; the sequence is PENIINKMGNWIAGCDICQDVCPWNQKHIPST.

This sequence belongs to the QueG family. As to quaternary structure, monomer. Requires cob(II)alamin as cofactor. The cofactor is [4Fe-4S] cluster.

Its subcellular location is the cytoplasm. It catalyses the reaction epoxyqueuosine(34) in tRNA + AH2 = queuosine(34) in tRNA + A + H2O. Its pathway is tRNA modification; tRNA-queuosine biosynthesis. Functionally, catalyzes the conversion of epoxyqueuosine (oQ) to queuosine (Q), which is a hypermodified base found in the wobble positions of tRNA(Asp), tRNA(Asn), tRNA(His) and tRNA(Tyr). The sequence is that of Epoxyqueuosine reductase from Prochlorococcus marinus (strain NATL2A).